Consider the following 2183-residue polypeptide: MLLVCPCFFLLVVLGTRWAGWGSHQAEAAQLRQFYVAAQGILWNYHPEPTDPSLNSIPSFKKIVYREYEQYFKKEKPRSSNSGLLGPTLYAEVGDVIKVHFRNKADKPLSIHPQGIKYSKFSEGASYADHTFPAERKDDAVAPGEEYTYEWIVSEDSGPTPDDPPCLTHIYYSYENLTQDFNSGLIGPLLICKKGTLTEDGTQKMFDKQHVLLFAVFDESKSRSQSPSLMYTINGFVNKTMPDITVCAHDHVSWHLIGMSSGPELFSIHFNGQVLEQNQHKVSTVTLVSATSTTANMTMSPEGRWIVSSLIPKHYQAGMQAYIDIKNCPKKTRSPKTLTREQRRYMKRWEYFIAAEEVIWNYAPVIPANMDKIYRSQHLDNFSNQIGKHYKKVIYRQYEEETFTKRTDNPSIKQSGILGPVIRAQVRDTLKIVFKNMASRPYSIYPHGVTFSPYEDGINSSSTSGSHTTIRPVQPGETFTYKWNILEFDEPTENDAQCLTRPYYSDVDVTRDIASGLIGLLLICKSRSLDQRGVQRVADIEQQAVFAVFDENKSWYIEDNINKFCENPDEVKRDDPKFYESNIMSTINGYVPESISTLGFCFDDTVQWHFCSVGTHDDILTIHFTGHSFIYGRRHEDTLTLFPMRGESVTVTMDNVGTWMLTTMNSNPKRRNLRLRFRDVKCNRDYDNEDSYEIYEPPAPTSMTTRRIHDSLENEFGIDNEDDDYQYLLASSLGIRSFKNSSLNPEENEFNLTALALENSSEFISPSTDRVVDSNSSRILSKIINNNLKDFQRTLPGSGATVAGTLLRNLIGLDENFVLNSSTEHRSSSYHENDMENPQSNITMVYLLPLGPKGSGNREQDKPKTIKTGRPHMMKHRFSWMKAPAGKTGRHSNPKNSYSGMKSEEDIPSELIPLKQKITSKFLNRRWRVASEKGSYEIIAANGEDTDVDKLTNSPQNQNITVPRGESTSHTNTTRKPSDLPTFSGVGHKSPHVRQEEENSGFQKRQLFIRTRKKKKNKKLALHSPLSPRGFDPLRGHNHSPFPDRRLLNHSLLLHKSNETALSPDLNQTSPSMSTDRSLPDYNQYSKNDTEQMSSSLDLYQSVPAEEHSPTFPAQDPDQTHSTTDPSYRSSPPELSQGLDYDLSHDFYPDDIGLTSFFPDQSQKSSFSSDDDQAIPSSDLSLFTISPELDQTIIYPDLDQLLLSPEDNQKTSSPDLGQVPLSPDDNQKTSSPDLGQVSLSPDDNQKTSSPDLGQVPLSLDDNQKTTSPDLGQVPLSPDDNQMITSPDLGQVPLSSDNQKTSSPDLGQVPLFPEDNQNYFLDLSQVPLSSDQNQETSSTDLLTLSPDFGQTVLSPDLDQLPLPSDNSQVTVSPDLSLLTLSPDFNEIILAPDLGQVTLSPDLIQTNPALNHGHKASSADPDQASYPPDSGQASSLPELNRTLPHPDLTHIPPPSPSPTLNNTSLSRKFNPLVVVGLSRVDGDDVEIVPSEEPERIDEDYAEDDFVTYNDPYRTDTRTDVNSSRNPDTIAAWYLRGHGGHKKFYYIAAEEITWNYAEFAQSEMDHEDTGHTPKDTTYKKVVFRKYLDSTFTSRDPRAEYEEHLGILGPVIRAEVDDVIQVRFKNLASRPYSLHAHGLSYEKSSEGKTYEDESPEWFQEDDAVQPNSSYTYVWHATKRSGPENPGSACRAWAYYSAVNVERDIHSGLIGPLLICRKGTLHMERNLPMDMREFVLLFMVFDEKKSWYYEKSKGSRRIESPEEKNAHKFYAINGMIYNLPGLRMYEQEWVRLHLLNMGGSRDIHVVHFHGQTLLDNRTKQHQLGVWPLLPGSFKTLEMKASKPGWWLLDTEVGENQVAGMQTPFLIIDKECKMPMGLSTGVISDSQIKASEYLTYWEPRLARLNNAGSYNAWSIEKTALDFPIKPWIQVDMQKEVVVTGIQTQGAKHYLKSCFTTEFQVAYSSDQTNWQIFRGKSGKSVMYFTGNSDGSTIKENRLDPPIVARYIRIHPTKSYNRPTLRLELQGCEVNGCSTPLGLEDGRIQDKQITASSFKKSWWGDYWEPSLARLNAQGRVNAWQAKANNNKQWLQVDLLKIKKVTAIVTQGCKSLSSEMYVKSYSIQYSDQGVAWKPYRQKSSMVDKIFEGNSNTKGHMKNFFNPPIISRFIRIIPKTWNQSIALRLELFGCDIY.

An N-terminal signal peptide occupies residues 1 to 19 (MLLVCPCFFLLVVLGTRWA). 4 Plastocyanin-like domains span residues 30–192 (QLRQ…LLIC), 202–328 (TQKM…IKNC), 347–524 (KRWE…LLIC), and 534–682 (VQRV…DVKC). 2 F5/8 type A domains span residues 30–328 (QLRQ…IKNC) and 347–682 (KRWE…DVKC). Positions 138 and 139 each coordinate Ca(2+). N-linked (GlcNAc...) asparagine glycans are attached at residues Asn176, Asn238, and Asn381. The residue at position 638 (Thr638) is a Phosphothreonine. A b region spans residues 691-1533 (SYEIYEPPAP…PDTIAAWYLR (843 aa)). Residues Tyr692 and Tyr725 each carry the sulfotyrosine modification. A propeptide spans 737-1533 (SFKNSSLNPE…PDTIAAWYLR (797 aa)) (activation peptide (connecting region)). N-linked (GlcNAc...) asparagine glycosylation occurs at Asn841. Disordered stretches follow at residues 884–904 (PAGK…MKSE), 947–1045 (DVDK…FPDR), and 1059–1144 (ETAL…YDLS). The tract at residues 892 to 908 (SNPKNSYSGMKSEEDIP) is 1 X 17 AA tandem repeats. Residues 892-911 (SNPKNSYSGMKSEEDIPSEL) form a 1-1 repeat. The residue at position 903 (Ser903) is a Phosphoserine. Residues 951–975 (LTNSPQNQNITVPRGESTSHTNTTR) are compositionally biased toward polar residues. 2 N-linked (GlcNAc...) asparagine glycosylation sites follow: Asn959 and Asn972. Basic residues predominate over residues 1010-1021 (RTRKKKKNKKLA). 2 stretches are compositionally biased toward polar residues: residues 1059–1099 (ETAL…SLDL) and 1120–1134 (THST…SPPE). Tandem repeats lie at residues 1175–1183 (IPSSDLSLF), 1184–1192 (TISPELDQT), 1193–1201 (IIYPDLDQL), 1202–1210 (LLSPEDNQK), 1211–1219 (TSSPDLGQV), 1220–1228 (PLSPDDNQK), 1229–1237 (TSSPDLGQV), 1238–1246 (SLSPDDNQK), 1247–1255 (TSSPDLGQV), 1256–1264 (PLSLDDNQK), 1265–1273 (TTSPDLGQV), 1274–1282 (PLSPDDNQM), 1283–1291 (ITSPDLGQV), 1292–1299 (PLSSDNQK), 1300–1308 (TSSPDLGQV), 1309–1316 (PLFPEDNQ), 1317–1325 (NYFLDLSQV), 1326–1334 (PLSSDQNQE), 1335–1341 (TSSTDLL), 1342–1350 (TLSPDFGQT), 1351–1359 (VLSPDLDQL), 1360–1368 (PLPSDNSQV), 1369–1377 (TVSPDLSLL), 1378–1386 (TLSPDFNEI), 1387–1395 (ILAPDLGQV), 1396–1404 (TLSPDLIQT), 1405–1413 (NPALNHGHK), 1414–1422 (ASSADPDQA), 1423–1431 (SYPPDSGQA), 1432–1440 (SSLPELNRT), 1441–1449 (LPHPDLTHI), and 1452–1461 (PSPSPTLNNT). Residues 1175–1461 (IPSSDLSLFT…PSPSPTLNNT (287 aa)) are 32 X 9 AA approximate tandem repeats of [TNP]-L-S-P-D-L-S-Q-T. Residues 1204-1312 (SPEDNQKTSS…PDLGQVPLFP (109 aa)) are disordered. Residues 1228-1251 (KTSSPDLGQVSLSPDDNQKTSSPD) show a composition bias toward polar residues. Residues 1292–1304 (PLSSDNQKTSSPD) show a composition bias toward polar residues. Positions 1403–1462 (QTNPALNHGHKASSADPDQASYPPDSGQASSLPELNRTLPHPDLTHIPPPSPSPTLNNTS) are disordered. Residue Asn1438 is glycosylated (N-linked (GlcNAc...) asparagine). Plastocyanin-like domains lie at 1538-1711 (HKKF…LLIC) and 1721-1866 (NLPM…DKEC). In terms of domain architecture, F5/8 type A 3 spans 1538–1866 (HKKFYYIAAE…TPFLIIDKEC (329 aa)). Positions 1802 and 1804 each coordinate Cu cation. N-linked (GlcNAc...) asparagine glycosylation occurs at Asn1811. F5/8 type C domains lie at 1866–2020 (CKMP…LQGC) and 2025–2180 (CSTP…LFGC). 2 cysteine pairs are disulfide-bonded: Cys1866–Cys2020 and Cys2025–Cys2180.

Belongs to the multicopper oxidase family. As to quaternary structure, factor Va, the activated form of factor V, is composed of a heavy chain and a light chain, non-covalently bound. The interaction between the two chains is calcium-dependent. Forms heterodimer with SERPINA5. Thrombin activates factor V proteolytically to the active cofactor, factor Va (formation of a heavy chain at the N-terminus and a light chain at the C-terminus). In terms of processing, sulfation is required for efficient thrombin cleavage and activation and for full procoagulant activity. Post-translationally, activated protein C inactivates factor V and factor Va by proteolytic degradation.

The protein localises to the secreted. Its activity is regulated as follows. Inhibited by SERPINA5. Functionally, central regulator of hemostasis. It serves as a critical cofactor for the prothrombinase activity of factor Xa that results in the activation of prothrombin to thrombin. This chain is Coagulation factor V (F5), found in Mus musculus (Mouse).